The chain runs to 478 residues: MASTAATAALSIIKSTGGAAVTRSSRASFGHIPSTSVSARRLGFSAVVDSRFSVHVASKVHSVRGKGARGVITMAKKSVGDLNSVDLKGKKVFVRADLNVPLDDNQNITDDTRIRAAIPTIKFLIENGAKVILSTHLGRPKGVTPKFSLAPLVPRLSELLGIEVVKADDCIGPEVETLVASLPEGGVLLLENVRFYKEEEKNEPDFAKKLASLADLYVNDAFGTAHRAHASTEGVTKFLKPSVAGFLLQKELDYLVGAVSNPKRPFAAIVGGSKVSSKIGVIESLLEKCDILLLGGGMIFTFYKAQGLSVGSSLVEEDKLELATTLLAKAKARGVSLLLPTDVVIADKFAPDANSKIVPASAIPDGWMGLDIGPDSVKTFNEALDTTQTVIWNGPMGVFEFEKFAKGTEAVANKLAELSKKGVTTIIGGGDSVAAVEKVGVAGVMSHISTGGGASLELLEGKVLPGVVALDEATPVTV.

The transit peptide at 1 to 74 directs the protein to the chloroplast; that stretch reads MASTAATAAL…GKGARGVITM (74 aa). Residue serine 78 is modified to Phosphoserine. (2R)-3-phosphoglycerate is bound by residues alanine 96, aspartate 97, asparagine 99, arginine 113, threonine 135, histidine 136, glycine 138, arginine 139, arginine 194, histidine 226, and arginine 227. Glycine 272 is an ADP binding site. Glycine 272 serves as a coordination point for CDP. Lysine 274 and lysine 278 together coordinate AMP. ATP is bound at residue lysine 278. Residue glycine 296 coordinates ADP. Glycine 296 provides a ligand contact to CDP. Residues glycine 297 and glycine 369 each contribute to the AMP site. ATP is bound by residues glycine 297 and glycine 369. Glycine 394 and phenylalanine 399 together coordinate CDP. Phenylalanine 399 provides a ligand contact to ADP. Position 400 (glutamate 400) interacts with AMP. Residues glutamate 400, aspartate 431, and serine 432 each coordinate ATP. Residue aspartate 431 coordinates Mg(2+).

This sequence belongs to the phosphoglycerate kinase family. In terms of assembly, monomer. It depends on Mg(2+) as a cofactor.

The protein resides in the plastid. It is found in the chloroplast. It catalyses the reaction (2R)-3-phosphoglycerate + ATP = (2R)-3-phospho-glyceroyl phosphate + ADP. It functions in the pathway carbohydrate biosynthesis; Calvin cycle. This Arabidopsis thaliana (Mouse-ear cress) protein is Phosphoglycerate kinase 2, chloroplastic.